Here is a 454-residue protein sequence, read N- to C-terminus: Signal recognition particle protein (454 aa).

GTP contacts are provided by residues 102–109 (GLQGTGKT), 184–188 (DTAGR), and 242–245 (TKMD).

Belongs to the GTP-binding SRP family. SRP54 subfamily. In terms of assembly, part of the signal recognition particle protein translocation system, which is composed of SRP and FtsY.

It is found in the cytoplasm. The catalysed reaction is GTP + H2O = GDP + phosphate + H(+). Involved in targeting and insertion of nascent membrane proteins into the cytoplasmic membrane. Binds to the hydrophobic signal sequence of the ribosome-nascent chain (RNC) as it emerges from the ribosomes. The SRP-RNC complex is then targeted to the cytoplasmic membrane where it interacts with the SRP receptor FtsY. In Aquifex aeolicus (strain VF5), this protein is Signal recognition particle protein.